Reading from the N-terminus, the 195-residue chain is ATP-dependent Clp protease proteolytic subunit (195 aa).

The active-site Nucleophile is the Ser-98. His-123 is a catalytic residue.

The protein belongs to the peptidase S14 family. In terms of assembly, fourteen ClpP subunits assemble into 2 heptameric rings which stack back to back to give a disk-like structure with a central cavity, resembling the structure of eukaryotic proteasomes.

Its subcellular location is the cytoplasm. It carries out the reaction Hydrolysis of proteins to small peptides in the presence of ATP and magnesium. alpha-casein is the usual test substrate. In the absence of ATP, only oligopeptides shorter than five residues are hydrolyzed (such as succinyl-Leu-Tyr-|-NHMec, and Leu-Tyr-Leu-|-Tyr-Trp, in which cleavage of the -Tyr-|-Leu- and -Tyr-|-Trp bonds also occurs).. Cleaves peptides in various proteins in a process that requires ATP hydrolysis. Has a chymotrypsin-like activity. Plays a major role in the degradation of misfolded proteins. The protein is ATP-dependent Clp protease proteolytic subunit of Alkaliphilus oremlandii (strain OhILAs) (Clostridium oremlandii (strain OhILAs)).